The sequence spans 87 residues: Keratin-associated protein 19-3 (87 aa).

The tract at residues 9-82 (GGLGYGYGSF…RRPSCCGGYG (74 aa)) is 23 X 2 AA repeats of G-[YCGS].

It belongs to the KRTAP type 19 family. Interacts with hair keratins. As to expression, strong expression in narrowly defined pattern restricted to the lower and middle cortical regions of the hair shaft in both developing and cycling hair. During hair follicle regression (catagen), expression levels decrease until expression is no longer detectable in follicles at resting stage (telogen).

Its function is as follows. In the hair cortex, hair keratin intermediate filaments are embedded in an interfilamentous matrix, consisting of hair keratin-associated proteins (KRTAP), which are essential for the formation of a rigid and resistant hair shaft through their extensive disulfide bond cross-linking with abundant cysteine residues of hair keratins. The matrix proteins include the high-sulfur and high-glycine-tyrosine keratins. The sequence is that of Keratin-associated protein 19-3 (Krtap19-3) from Mus musculus (Mouse).